Consider the following 300-residue polypeptide: Nucleotide-binding protein MCCL_0516 (300 aa).

Residue 15-22 participates in ATP binding; it reads GMSGAGKS. 66-69 is a binding site for GTP; it reads DLRG.

Belongs to the RapZ-like family.

Displays ATPase and GTPase activities. This is Nucleotide-binding protein MCCL_0516 from Macrococcus caseolyticus (strain JCSC5402) (Macrococcoides caseolyticum).